Consider the following 97-residue polypeptide: uncharacterized protein (97 aa).

Residues 58-97 (SLLLPRTVQTGGTEREKPGPGQRKRGAHCSACKRSSTRPS) are disordered.

This is an uncharacterized protein from Homo sapiens (Human).